The primary structure comprises 1396 residues: Side tail fiber protein pb1 (1396 aa).

Disordered stretches follow at residues 51 to 133 (KASG…SASS) and 145 to 203 (ARAA…SENK). Over residues 60–69 (SEINAKQSEL) the composition is skewed to polar residues. Low complexity-rich tracts occupy residues 81–133 (SATS…SASS) and 157–181 (NSAQAADASKTAAANSATAAKTSET). Coiled coils occupy residues 187-214 (ETAAKTSETNAKTSENKAKEYLDMASEL) and 1263-1396 (TSDA…KLGM). Over residues 189–199 (AAKTSETNAKT) the composition is skewed to polar residues. In terms of domain architecture, Peptidase S74 spans 1265–1394 (DARLKNDVRA…ARLSAIEDKL (130 aa)).

As to quaternary structure, homotrimer. Interacts with the O-antigens of host lipopolysaccharides. Post-translationally, the cleaved C-terminus functions as an intramolecular chaperone and is removed by an autoproteolytic process after correct trimerization and folding.

The protein resides in the virion. Functionally, assembles together with p132 to form the three L-shaped long tail fibers and the collar structure at the junction between the tail tube and the conical tail tip. The three L-shaped long tail fibers recognize the host lipopolysaccharides that serve as adhesion receptor for virus entry. Each fiber consists of a thin proximal rod of about 30 nm connected by a hinge to a thicker distal part of about 47 nm. This is Side tail fiber protein pb1 from Escherichia coli (Enterobacteria phage T5).